Consider the following 634-residue polypeptide: Probable potassium transport system protein Kup (634 aa).

12 consecutive transmembrane segments (helical) span residues 21–41, 61–81, 110–130, 148–168, 180–200, 217–237, 258–278, 296–316, 348–368, 377–397, 408–428, and 432–452; these read IILS…LYTL, ILSL…VAVI, IYIV…DGVI, PHMK…LFLC, FGPI…YNIA, FFLE…LAVT, WMYV…ALVL, GLYP…QALI, IYVP…VIGF, AYGV…IIYA, LWMM…ANII, and DGAW…RTWL.

Belongs to the HAK/KUP transporter (TC 2.A.72) family.

It is found in the cell inner membrane. The enzyme catalyses K(+)(in) + H(+)(in) = K(+)(out) + H(+)(out). In terms of biological role, transport of potassium into the cell. Likely operates as a K(+):H(+) symporter. This chain is Probable potassium transport system protein Kup, found in Xylella fastidiosa (strain 9a5c).